The following is a 288-amino-acid chain: ATP synthase gamma chain (288 aa).

Belongs to the ATPase gamma chain family. In terms of assembly, F-type ATPases have 2 components, CF(1) - the catalytic core - and CF(0) - the membrane proton channel. CF(1) has five subunits: alpha(3), beta(3), gamma(1), delta(1), epsilon(1). CF(0) has three main subunits: a, b and c.

The protein resides in the cell inner membrane. Functionally, produces ATP from ADP in the presence of a proton gradient across the membrane. The gamma chain is believed to be important in regulating ATPase activity and the flow of protons through the CF(0) complex. The sequence is that of ATP synthase gamma chain from Polaromonas sp. (strain JS666 / ATCC BAA-500).